The chain runs to 260 residues: CD320 antigen (260 aa).

The N-terminal stretch at 1-28 (MARGGAGRAVALGLVLRLLFGLRTGLEA) is a signal peptide. The Extracellular portion of the chain corresponds to 29–208 (APAPAHTRVQ…DSSRNPSAYG (180 aa)). The LDL-receptor class A 1 domain occupies 46–83 (SCPTDTFQCLTSGYCVPLSWRCDGDQDCSDGSDEEDCR). Disulfide bonds link Cys47–Cys60, Cys54–Cys73, and Cys67–Cys82. Residues Trp65, Asp68, Asp70, Asp72, Asp78, and Glu79 each contribute to the Ca(2+) site. Asn118 is a glycosylation site (N-linked (GlcNAc...) asparagine). The region spanning 123-160 (PCQESELHCILDDVCIPHTWRCDGHPDCLDSSDELSCD) is the LDL-receptor class A 2 domain. Cystine bridges form between Cys124–Cys137, Cys131–Cys150, and Cys144–Cys159. The Ca(2+) site is built by Trp142, Asp145, His147, Asp149, Asp155, and Glu156. The N-linked (GlcNAc...) asparagine glycan is linked to Asn185. Residues 209 to 229 (VIAAAGVLSAILVSATLLILL) form a helical membrane-spanning segment. At 230–260 (RLRGQGYLPPPGLLVAVKESLLLSERKTSLI) the chain is on the cytoplasmic side.

As to quaternary structure, interacts (via LDL-receptor class A domains) with TCN2.

Its subcellular location is the cell membrane. Receptor for transcobalamin saturated with cobalamin (TCbl). Plays an important role in cobalamin uptake. Plasma membrane protein that is expressed on follicular dendritic cells (FDC) and mediates interaction with germinal center B cells. Functions as a costimulator to promote B cell responses to antigenic stimuli; promotes B cell differentiation and proliferation. Germinal center-B (GC-B) cells differentiate into memory B-cells and plasma cells (PC) through interaction with T-cells and follicular dendritic cells (FDC). CD320 augments the proliferation of PC precursors generated by IL-10. This chain is CD320 antigen (Cd320), found in Mus musculus (Mouse).